The primary structure comprises 365 residues: Aminomethyltransferase (365 aa).

The protein belongs to the GcvT family. In terms of assembly, the glycine cleavage system is composed of four proteins: P, T, L and H.

It catalyses the reaction N(6)-[(R)-S(8)-aminomethyldihydrolipoyl]-L-lysyl-[protein] + (6S)-5,6,7,8-tetrahydrofolate = N(6)-[(R)-dihydrolipoyl]-L-lysyl-[protein] + (6R)-5,10-methylene-5,6,7,8-tetrahydrofolate + NH4(+). Functionally, the glycine cleavage system catalyzes the degradation of glycine. This Chlorobium luteolum (strain DSM 273 / BCRC 81028 / 2530) (Pelodictyon luteolum) protein is Aminomethyltransferase.